The following is a 292-amino-acid chain: Phosphoribosylaminoimidazole-succinocarboxamide synthase (292 aa).

It belongs to the SAICAR synthetase family.

The catalysed reaction is 5-amino-1-(5-phospho-D-ribosyl)imidazole-4-carboxylate + L-aspartate + ATP = (2S)-2-[5-amino-1-(5-phospho-beta-D-ribosyl)imidazole-4-carboxamido]succinate + ADP + phosphate + 2 H(+). Its pathway is purine metabolism; IMP biosynthesis via de novo pathway; 5-amino-1-(5-phospho-D-ribosyl)imidazole-4-carboxamide from 5-amino-1-(5-phospho-D-ribosyl)imidazole-4-carboxylate: step 1/2. This chain is Phosphoribosylaminoimidazole-succinocarboxamide synthase, found in Elusimicrobium minutum (strain Pei191).